The primary structure comprises 1060 residues: DNA topoisomerase 1 (1060 aa).

The region spanning 1–141 (MILVIAEKPN…KRMKFSALTK (141 aa)) is the Toprim domain. 2 residues coordinate Mg(2+): Glu-7 and Asp-107. In terms of domain architecture, Topo IA-type catalytic spans 156-947 (NFGMANAGIA…EAKIRLTKIL (792 aa)). An interaction with DNA region spans residues 196 to 201 (STGRVQ). Positions 482 to 591 (LIGYLAGKGG…IKVYLQLLGI (110 aa)) constitute a DOD-type homing endonuclease domain. Residue Tyr-690 is the O-(5'-phospho-DNA)-tyrosine intermediate of the active site. Residues 978 to 1006 (CPKCGGDLIVKYNEKTGKRFVGCSNWPKC) form a C4-type 1 zinc finger. The C4-type 2; atypical zinc finger occupies 1025–1050 (CCNGAPVVIIREKDGREWEICLDMNC).

This sequence belongs to the type IA topoisomerase family. In terms of assembly, monomer. It depends on Mg(2+) as a cofactor. In terms of processing, this protein undergoes a protein self splicing that involves a post-translational excision of the intervening region (intein) followed by peptide ligation.

The enzyme catalyses ATP-independent breakage of single-stranded DNA, followed by passage and rejoining.. Its function is as follows. Releases the supercoiling and torsional tension of DNA, which is introduced during the DNA replication and transcription, by transiently cleaving and rejoining one strand of the DNA duplex. Introduces a single-strand break via transesterification at a target site in duplex DNA. The scissile phosphodiester is attacked by the catalytic tyrosine of the enzyme, resulting in the formation of a DNA-(5'-phosphotyrosyl)-enzyme intermediate and the expulsion of a 3'-OH DNA strand. The free DNA strand then undergoes passage around the unbroken strand, thus removing DNA supercoils. Finally, in the religation step, the DNA 3'-OH attacks the covalent intermediate to expel the active-site tyrosine and restore the DNA phosphodiester backbone. This is DNA topoisomerase 1 (topA) from Pyrococcus furiosus (strain ATCC 43587 / DSM 3638 / JCM 8422 / Vc1).